Reading from the N-terminus, the 472-residue chain is Siroheme synthase (472 aa).

Positions 1–203 (MNYLPIFIDI…GKIQEAKADL (203 aa)) are precorrin-2 dehydrogenase /sirohydrochlorin ferrochelatase. Residues 22–23 (DI) and 43–44 (KS) each bind NAD(+). A Phosphoserine modification is found at Ser-128. A uroporphyrinogen-III C-methyltransferase region spans residues 216 to 472 (GEVYLVGGGP…SSKKSYLFGG (257 aa)). S-adenosyl-L-methionine is bound at residue Pro-225. The Proton acceptor role is filled by Asp-248. Lys-270 functions as the Proton donor in the catalytic mechanism. Residues 301 to 303 (GGD), Ile-306, 331 to 332 (TA), Met-383, and Gly-412 each bind S-adenosyl-L-methionine.

The protein in the N-terminal section; belongs to the precorrin-2 dehydrogenase / sirohydrochlorin ferrochelatase family. It in the C-terminal section; belongs to the precorrin methyltransferase family.

It carries out the reaction uroporphyrinogen III + 2 S-adenosyl-L-methionine = precorrin-2 + 2 S-adenosyl-L-homocysteine + H(+). The catalysed reaction is precorrin-2 + NAD(+) = sirohydrochlorin + NADH + 2 H(+). The enzyme catalyses siroheme + 2 H(+) = sirohydrochlorin + Fe(2+). The protein operates within cofactor biosynthesis; adenosylcobalamin biosynthesis; precorrin-2 from uroporphyrinogen III: step 1/1. It participates in cofactor biosynthesis; adenosylcobalamin biosynthesis; sirohydrochlorin from precorrin-2: step 1/1. Its pathway is porphyrin-containing compound metabolism; siroheme biosynthesis; precorrin-2 from uroporphyrinogen III: step 1/1. It functions in the pathway porphyrin-containing compound metabolism; siroheme biosynthesis; siroheme from sirohydrochlorin: step 1/1. The protein operates within porphyrin-containing compound metabolism; siroheme biosynthesis; sirohydrochlorin from precorrin-2: step 1/1. Multifunctional enzyme that catalyzes the SAM-dependent methylations of uroporphyrinogen III at position C-2 and C-7 to form precorrin-2 via precorrin-1. Then it catalyzes the NAD-dependent ring dehydrogenation of precorrin-2 to yield sirohydrochlorin. Finally, it catalyzes the ferrochelation of sirohydrochlorin to yield siroheme. In Ruthia magnifica subsp. Calyptogena magnifica, this protein is Siroheme synthase.